The sequence spans 203 residues: Anti-sigma-W factor RsiW (203 aa).

Residues 1–86 (MECPKEIVLL…TARLRRFLHR (86 aa)) are Cytoplasmic-facing. Zn(2+) is bound by residues H30, C34, and C37. Residues 87–103 (HPLLTAASLFLALTLGS) traverse the membrane as a helical segment. Residues 104–203 (LASSWGERGA…RFNRALQSIE (100 aa)) lie on the Extracellular side of the membrane.

This sequence belongs to the zinc-associated anti-sigma factor (ZAS) superfamily. Anti-sigma-W factor family. The cofactor is Zn(2+). Post-translationally, is processed by three successive proteolytic events. First, the extracellular region of RsiW is cleaved by PrsW (Site-1 cleavage) in response to cell envelope stresses. Next, it undergoes cleavage at an intramembrane site (Site-2 cleavage) mediated by RasP. This cleavage uncovers a cryptic proteolytic tag with conserved alanine residues in the transmembrane segment, that is recognized mainly by the ClpXP protease, which completely degrades the protein in the cytoplasm and leads to the induction of the sigma-W-controlled genes.

Its subcellular location is the membrane. In terms of biological role, is the anti-sigma factor for SigW. The presence of RsiW leads to the inactivation of SigW, and its proteolytic destruction to sigma-W activation. This Geobacillus kaustophilus (strain HTA426) protein is Anti-sigma-W factor RsiW (rsiW).